The chain runs to 542 residues: Chaperonin GroEL (542 aa).

ATP is bound by residues 29–32 (TLGP), 86–90 (DGTTT), glycine 413, 476–478 (NAA), and aspartate 492.

This sequence belongs to the chaperonin (HSP60) family. Forms a cylinder of 14 subunits composed of two heptameric rings stacked back-to-back. Interacts with the co-chaperonin GroES.

The protein resides in the cytoplasm. It catalyses the reaction ATP + H2O + a folded polypeptide = ADP + phosphate + an unfolded polypeptide.. Functionally, together with its co-chaperonin GroES, plays an essential role in assisting protein folding. The GroEL-GroES system forms a nano-cage that allows encapsulation of the non-native substrate proteins and provides a physical environment optimized to promote and accelerate protein folding. The sequence is that of Chaperonin GroEL from Streptococcus mutans serotype c (strain ATCC 700610 / UA159).